The primary structure comprises 327 residues: Phenylalanine--tRNA ligase alpha subunit (327 aa).

E252 is a binding site for Mg(2+).

It belongs to the class-II aminoacyl-tRNA synthetase family. Phe-tRNA synthetase alpha subunit type 1 subfamily. In terms of assembly, tetramer of two alpha and two beta subunits. Mg(2+) serves as cofactor.

It localises to the cytoplasm. It carries out the reaction tRNA(Phe) + L-phenylalanine + ATP = L-phenylalanyl-tRNA(Phe) + AMP + diphosphate + H(+). This is Phenylalanine--tRNA ligase alpha subunit from Yersinia enterocolitica serotype O:8 / biotype 1B (strain NCTC 13174 / 8081).